The primary structure comprises 209 residues: Large ribosomal subunit protein uL3 (209 aa).

Q150 is subject to N5-methylglutamine.

This sequence belongs to the universal ribosomal protein uL3 family. In terms of assembly, part of the 50S ribosomal subunit. Forms a cluster with proteins L14 and L19. Methylated by PrmB.

Functionally, one of the primary rRNA binding proteins, it binds directly near the 3'-end of the 23S rRNA, where it nucleates assembly of the 50S subunit. This is Large ribosomal subunit protein uL3 from Photobacterium profundum (strain SS9).